The following is a 174-amino-acid chain: B3 domain-containing protein At2g31862 (174 aa).

The TF-B3 DNA-binding region spans 1-71 (MWVNLSCMCH…KLYIALVPLD (71 aa)).

It localises to the nucleus. The sequence is that of B3 domain-containing protein At2g31862 from Arabidopsis thaliana (Mouse-ear cress).